We begin with the raw amino-acid sequence, 1582 residues long: ATP-binding cassette sub-family C member 8 (1582 aa).

Topologically, residues methionine 1 to alanine 30 are extracellular. A disulfide bridge connects residues cysteine 6 and cysteine 26. Residue asparagine 10 is glycosylated (N-linked (GlcNAc...) asparagine). The chain crosses the membrane as a helical span at residues leucine 31–leucine 47. At phenylalanine 48–asparagine 72 the chain is on the cytoplasmic side. The helical transmembrane segment at leucine 73–isoleucine 89 threads the bilayer. Residues alanine 90–leucine 106 lie on the Extracellular side of the membrane. A helical transmembrane segment spans residues tyrosine 107–tyrosine 123. The Cytoplasmic portion of the chain corresponds to tyrosine 124 to leucine 136. Residues isoleucine 137 to lysine 153 form a helical membrane-spanning segment. The Extracellular portion of the chain corresponds to phenylalanine 154–phenylalanine 169. The chain crosses the membrane as a helical span at residues cysteine 170–glutamate 186. Topologically, residues valine 187–serine 303 are cytoplasmic. One can recognise an ABC transmembrane type-1 1 domain in the interval leucine 299–lysine 602. Residues threonine 304 to cysteine 319 traverse the membrane as a helical segment. Topologically, residues isoleucine 320–tyrosine 356 are extracellular. Residues valine 357–phenylalanine 372 traverse the membrane as a helical segment. Residues leucine 373–leucine 438 lie on the Cytoplasmic side of the membrane. A helical transmembrane segment spans residues tryptophan 439–tyrosine 454. The Extracellular segment spans residues isoleucine 455 to alanine 460. A helical membrane pass occupies residues leucine 461 to valine 473. Over glutamine 474–serine 541 the chain is Cytoplasmic. Residues isoleucine 542–isoleucine 557 form a helical membrane-spanning segment. Over threonine 558 to alanine 576 the chain is Extracellular. The helical transmembrane segment at phenylalanine 577–leucine 592 threads the bilayer. Over leucine 593 to leucine 1013 the chain is Cytoplasmic. An ABC transporter 1 domain is found at valine 679–threonine 930. ATP contacts are provided by tryptophan 688, glycine 716, serine 720, and serine 721. Serine 720 contributes to the Mg(2+) binding site. The interval serine 741–glycine 768 is disordered. The span at asparagine 753–serine 766 shows a compositional bias: basic and acidic residues. Glutamine 775 lines the Mg(2+) pocket. The segment covering leucine 939 to proline 950 has biased composition (basic and acidic residues). Residues leucine 939 to serine 962 are disordered. Residues leucine 1013–isoleucine 1307 form the ABC transmembrane type-1 2 domain. The chain crosses the membrane as a helical span at residues serine 1014–aspartate 1031. Residues tyrosine 1032–valine 1067 lie on the Extracellular side of the membrane. A glycan (N-linked (GlcNAc...) asparagine) is linked at asparagine 1050. The chain crosses the membrane as a helical span at residues phenylalanine 1068–valine 1084. Residues threonine 1085 to leucine 1143 lie on the Cytoplasmic side of the membrane. A helical transmembrane segment spans residues serine 1144 to threonine 1161. Position 1162 (proline 1162) is a topological domain, extracellular. The chain crosses the membrane as a helical span at residues valine 1163–cysteine 1175. At tyrosine 1176–glutamate 1249 the chain is on the cytoplasmic side. The chain crosses the membrane as a helical span at residues valine 1250 to alanine 1265. Topologically, residues threonine 1266–valine 1281 are extracellular. Residues glycine 1282 to tryptophan 1297 form a helical membrane-spanning segment. The Cytoplasmic portion of the chain corresponds to methionine 1298–lysine 1582. Residues isoleucine 1345–arginine 1579 enclose the ABC transporter 2 domain. Residues threonine 1381, glycine 1382, glycine 1384, lysine 1385, serine 1386, and serine 1387 each coordinate ADP. Serine 1483 serves as a coordination point for ATP.

It belongs to the ABC transporter superfamily. ABCC family. Conjugate transporter (TC 3.A.1.208) subfamily. In terms of assembly, forms an heterooctamer with KCNJ11; four ABCC8/SUR1 molecules interact with one KCNJ11 homotetramer.

The protein localises to the cell membrane. KATP channels are regulated by cytoplasmic ATP/ADP ratios; ATP inhibits the channel by closing the pore, while ADP activates the channel. Activated by phosphatidylinositol 4,5-biphosphate (PtdIns(4,5)P2). Functionally, regulator subunit of pancreatic ATP-sensitive potassium channel (KATP), playing a major role in the regulation of insulin release. In pancreatic cells, it forms KATP channels with KCNJ11; KCNJ11 forms the channel pore while ABCC8 is required for activation and regulation. The protein is ATP-binding cassette sub-family C member 8 (Abcc8) of Rattus norvegicus (Rat).